The primary structure comprises 504 residues: ATP synthase subunit alpha (504 aa).

170 to 177 contacts ATP; it reads GDRQTGKT.

The protein belongs to the ATPase alpha/beta chains family. As to quaternary structure, F-type ATPases have 2 components, CF(1) - the catalytic core - and CF(0) - the membrane proton channel. CF(1) has five subunits: alpha(3), beta(3), gamma(1), delta(1), epsilon(1). CF(0) has four main subunits: a(1), b(1), b'(1) and c(9-12).

The protein resides in the cellular thylakoid membrane. The catalysed reaction is ATP + H2O + 4 H(+)(in) = ADP + phosphate + 5 H(+)(out). Produces ATP from ADP in the presence of a proton gradient across the membrane. The alpha chain is a regulatory subunit. In Prochlorococcus marinus (strain NATL1A), this protein is ATP synthase subunit alpha.